The sequence spans 180 residues: Transcriptional repressor NrdR (180 aa).

Residues 3 to 34 fold into a zinc finger; that stretch reads CPRCSKQEIRVLESRSAEGGQSVRRRRECMSC. An ATP-cone domain is found at 49 to 139; sequence IMVIKRDGSR…VYRQFQGIKD (91 aa). The interval 155-180 is disordered; the sequence is LERLLQDSSASDSESSGSPDLVGEYS. The span at 160–174 shows a compositional bias: low complexity; the sequence is QDSSASDSESSGSPD.

The protein belongs to the NrdR family. Zn(2+) serves as cofactor.

Negatively regulates transcription of bacterial ribonucleotide reductase nrd genes and operons by binding to NrdR-boxes. The sequence is that of Transcriptional repressor NrdR from Synechococcus sp. (strain JA-2-3B'a(2-13)) (Cyanobacteria bacterium Yellowstone B-Prime).